The primary structure comprises 361 residues: MFQILMENVEVQHIDRIAALLIFFTSFIGFACNTFIAFYIRRLSLLRNSFGRLLQLQAAGDAVFVLVWAFYFAPVLFFDIKPLQSLAIAARFAQLCLICYDISIYTHLVISLNRFISLYFPTSYQNIFTERFTTFLICSIIFVSFGFSWFLVIRDCQMGFSIPRWMLDYVSPPCEMINVYYAEFFRGLIVISMFAITNSFTFCRMHMHNRKKQTATVFETTQQKKRRAVETRFVQQVTMQGLLYVIELVTYFYISLRFPVPLEPVELAKSSNRWPNFLLTTYAWILVHALDGVITLIFNKQFRSVLRHPCRSQEALNISKTPSRRSRFTTNRDESNRKKSSILACTFISNSNTGYGSSVHV.

7 helical membrane passes run 20–40, 58–78, 92–112, 133–153, 176–196, 242–262, and 278–298; these read LLIFFTSFIGFACNTFIAFYI, AAGDAVFVLVWAFYFAPVLFF, FAQLCLICYDISIYTHLVISL, TTFLICSIIFVSFGFSWFLVI, MINVYYAEFFRGLIVISMFAI, LLYVIELVTYFYISLRFPVPL, and LLTTYAWILVHALDGVITLIF. N-linked (GlcNAc...) asparagine glycosylation occurs at asparagine 317.

It belongs to the G-protein coupled receptor 1 family.

It localises to the cell membrane. The chain is Serpentine receptor class X 45 (srx-45) from Caenorhabditis elegans.